Consider the following 261-residue polypeptide: tRNA U34 carboxymethyltransferase (261 aa).

Carboxy-S-adenosyl-L-methionine is bound by residues K25, W39, K44, G63, 114 to 115, Y135, and R250; that span reads VE.

This sequence belongs to the class I-like SAM-binding methyltransferase superfamily. CmoB family. Homotetramer.

It catalyses the reaction carboxy-S-adenosyl-L-methionine + 5-hydroxyuridine(34) in tRNA = 5-carboxymethoxyuridine(34) in tRNA + S-adenosyl-L-homocysteine + H(+). Its function is as follows. Catalyzes carboxymethyl transfer from carboxy-S-adenosyl-L-methionine (Cx-SAM) to 5-hydroxyuridine (ho5U) to form 5-carboxymethoxyuridine (cmo5U) at position 34 in tRNAs. In Helicobacter pylori (strain HPAG1), this protein is tRNA U34 carboxymethyltransferase.